Consider the following 396-residue polypeptide: S-adenosylmethionine synthase 4 (396 aa).

E12 is a binding site for Mg(2+). H18 is a binding site for ATP. E46 lines the K(+) pocket. L-methionine contacts are provided by E59 and Q102. ATP is bound by residues 170 to 172 (DGK), 238 to 241 (SGRF), D249, 255 to 256 (RK), A272, K276, and K280. D249 contributes to the L-methionine binding site. Residue K280 coordinates L-methionine.

The protein belongs to the AdoMet synthase family. In terms of assembly, homotetramer. The cofactor is Mn(2+). Mg(2+) serves as cofactor. Co(2+) is required as a cofactor. It depends on K(+) as a cofactor.

It localises to the cytoplasm. The enzyme catalyses L-methionine + ATP + H2O = S-adenosyl-L-methionine + phosphate + diphosphate. It participates in amino-acid biosynthesis; S-adenosyl-L-methionine biosynthesis; S-adenosyl-L-methionine from L-methionine: step 1/1. In terms of biological role, catalyzes the formation of S-adenosylmethionine from methionine and ATP. The reaction comprises two steps that are both catalyzed by the same enzyme: formation of S-adenosylmethionine (AdoMet) and triphosphate, and subsequent hydrolysis of the triphosphate. The sequence is that of S-adenosylmethionine synthase 4 (SAM4) from Hordeum vulgare (Barley).